Consider the following 345-residue polypeptide: RNA polymerase II holoenzyme cyclin-like subunit (345 aa).

In terms of domain architecture, Cyclin N-terminal spans 23 to 147; it reads ESRRKLLLLE…KLAEFEFYLI (125 aa).

Belongs to the cyclin family. Cyclin C subfamily. In terms of assembly, component of the SRB8-11 complex, a regulatory module of the Mediator complex.

Its subcellular location is the nucleus. In terms of biological role, component of the SRB8-11 complex. The SRB8-11 complex is a regulatory module of the Mediator complex which is itself involved in regulation of basal and activated RNA polymerase II-dependent transcription. The SRB8-11 complex may be involved in the transcriptional repression of a subset of genes regulated by Mediator. It may inhibit the association of the Mediator complex with RNA polymerase II to form the holoenzyme complex. The SRB8-11 complex phosphorylates the C-terminal domain (CTD) of the largest subunit of RNA polymerase II. The chain is RNA polymerase II holoenzyme cyclin-like subunit (SSN8) from Debaryomyces hansenii (strain ATCC 36239 / CBS 767 / BCRC 21394 / JCM 1990 / NBRC 0083 / IGC 2968) (Yeast).